The primary structure comprises 242 residues: MPLGLKPCCAVCKTQSSSMWKKGNQGEILCNGCTGKAVSSGGSGASASSTIQQNNGGGKQSKQEIHRRSARLRSTKYKAPASEKKVSTKGKGRRHIFKLKNPIKAPESVSTIITSESMFYKGIYYQIGDVIKVIDEDDGKPYYAQIRGFVQDQYCEKSAALTWLIPTQASPRDRFDPSTYIVGPEEDLPRKMEYLEFVCHAPSEYFKSRSCPFPTLPVRPEKGYVWTHIGPTPAVAIKETVG.

Residues Cys9–Cys33 form a GATA-type zinc finger. The segment at Gly44 to Lys85 is disordered. The segment covering Ala45–Asn54 has biased composition (low complexity).

Its subcellular location is the nucleus. Its function is as follows. Component of some chromatin complex recruited to chromatin sites methylated 'Lys-4' of histone H3 (H3K4me), with a preference for trimethylated form (H3K4me3). This Danio rerio (Zebrafish) protein is GATA zinc finger domain-containing protein 1 (gatad1).